A 183-amino-acid polypeptide reads, in one-letter code: Gene BABR protein 2 (183 aa).

The chain is Gene BABR protein 2 from Babesia bovis.